A 1168-amino-acid polypeptide reads, in one-letter code: Transcription-repair-coupling factor (1168 aa).

The region spanning 633–794 (DMQKSRPMDR…MLGVRDLSVI (162 aa)) is the Helicase ATP-binding domain. Residue 646–653 (GDVGYGKT) participates in ATP binding. The DEEQ box signature appears at 747-750 (DEEQ). The Helicase C-terminal domain occupies 808–969 (VLEQNMSFIK…GFKIAMRDLN (162 aa)).

It in the N-terminal section; belongs to the UvrB family. The protein in the C-terminal section; belongs to the helicase family. RecG subfamily.

Its subcellular location is the cytoplasm. Functionally, couples transcription and DNA repair by recognizing RNA polymerase (RNAP) stalled at DNA lesions. Mediates ATP-dependent release of RNAP and its truncated transcript from the DNA, and recruitment of nucleotide excision repair machinery to the damaged site. In Staphylococcus aureus (strain Mu50 / ATCC 700699), this protein is Transcription-repair-coupling factor.